A 287-amino-acid polypeptide reads, in one-letter code: Protoheme IX farnesyltransferase (287 aa).

Helical transmembrane passes span 9–29 (IVTMILVTTVASALIAGSATL), 31–51 (LIDWFWLMIGTALIAGSAGAA), 94–114 (IILWLGNGLVPACVGIATWLI), 132–152 (VGAIAGALPVFIGYTAAGGTL), 158–178 (WMLFGVLACWQYPHFMAIAWL), 202–222 (AWQSILGSVALATCGVVLAWF), 228–248 (VASAASVLATVLILAASWPLL), and 267–287 (LRWSLVVLPAVLLVMTLRASL).

Belongs to the UbiA prenyltransferase family. Protoheme IX farnesyltransferase subfamily.

The protein localises to the cell inner membrane. The enzyme catalyses heme b + (2E,6E)-farnesyl diphosphate + H2O = Fe(II)-heme o + diphosphate. Its pathway is porphyrin-containing compound metabolism; heme O biosynthesis; heme O from protoheme: step 1/1. In terms of biological role, converts heme B (protoheme IX) to heme O by substitution of the vinyl group on carbon 2 of heme B porphyrin ring with a hydroxyethyl farnesyl side group. In Rhodopirellula baltica (strain DSM 10527 / NCIMB 13988 / SH1), this protein is Protoheme IX farnesyltransferase.